Here is a 474-residue protein sequence, read N- to C-terminus: Pyruvate kinase (474 aa).

Substrate is bound at residue R33. K(+) contacts are provided by N35, S37, and D67. 35-38 is a binding site for ATP; the sequence is NFSH. Residues R74 and K155 each contribute to the ATP site. Residue E220 coordinates Mg(2+). Positions 243, 244, and 276 each coordinate substrate. D244 contacts Mg(2+).

The protein belongs to the pyruvate kinase family. Homotetramer. It depends on Mg(2+) as a cofactor. K(+) serves as cofactor.

The catalysed reaction is pyruvate + ATP = phosphoenolpyruvate + ADP + H(+). It functions in the pathway carbohydrate degradation; glycolysis; pyruvate from D-glyceraldehyde 3-phosphate: step 5/5. This chain is Pyruvate kinase (pyk), found in Corynebacterium efficiens (strain DSM 44549 / YS-314 / AJ 12310 / JCM 11189 / NBRC 100395).